A 365-amino-acid chain; its full sequence is tRNA 2-selenouridine synthase (365 aa).

One can recognise a Rhodanese domain in the interval 15-138; sequence LVSDHPIMDA…MRQFLIETID (124 aa). Catalysis depends on C98, which acts as the S-selanylcysteine intermediate.

This sequence belongs to the SelU family. As to quaternary structure, monomer.

The catalysed reaction is 5-methylaminomethyl-2-thiouridine(34) in tRNA + selenophosphate + (2E)-geranyl diphosphate + H2O + H(+) = 5-methylaminomethyl-2-selenouridine(34) in tRNA + (2E)-thiogeraniol + phosphate + diphosphate. The enzyme catalyses 5-methylaminomethyl-2-thiouridine(34) in tRNA + (2E)-geranyl diphosphate = 5-methylaminomethyl-S-(2E)-geranyl-thiouridine(34) in tRNA + diphosphate. It carries out the reaction 5-methylaminomethyl-S-(2E)-geranyl-thiouridine(34) in tRNA + selenophosphate + H(+) = 5-methylaminomethyl-2-(Se-phospho)selenouridine(34) in tRNA + (2E)-thiogeraniol. It catalyses the reaction 5-methylaminomethyl-2-(Se-phospho)selenouridine(34) in tRNA + H2O = 5-methylaminomethyl-2-selenouridine(34) in tRNA + phosphate. Functionally, involved in the post-transcriptional modification of the uridine at the wobble position (U34) of tRNA(Lys), tRNA(Glu) and tRNA(Gln). Catalyzes the conversion of 2-thiouridine (S2U-RNA) to 2-selenouridine (Se2U-RNA). Acts in a two-step process involving geranylation of 2-thiouridine (S2U) to S-geranyl-2-thiouridine (geS2U) and subsequent selenation of the latter derivative to 2-selenouridine (Se2U) in the tRNA chain. This Shewanella piezotolerans (strain WP3 / JCM 13877) protein is tRNA 2-selenouridine synthase.